Consider the following 168-residue polypeptide: Phosphopantetheine adenylyltransferase (168 aa).

Residue threonine 14 coordinates substrate. Residues 14–15 (TF) and histidine 22 each bind ATP. 3 residues coordinate substrate: lysine 46, leucine 78, and arginine 92. ATP contacts are provided by residues 93 to 95 (GLR), glutamate 103, and 128 to 134 (YSFISSS).

The protein belongs to the bacterial CoaD family. In terms of assembly, homohexamer. It depends on Mg(2+) as a cofactor.

The protein localises to the cytoplasm. It catalyses the reaction (R)-4'-phosphopantetheine + ATP + H(+) = 3'-dephospho-CoA + diphosphate. It participates in cofactor biosynthesis; coenzyme A biosynthesis; CoA from (R)-pantothenate: step 4/5. In terms of biological role, reversibly transfers an adenylyl group from ATP to 4'-phosphopantetheine, yielding dephospho-CoA (dPCoA) and pyrophosphate. The protein is Phosphopantetheine adenylyltransferase of Xanthomonas campestris pv. campestris (strain 8004).